The following is a 264-amino-acid chain: Thymidylate synthase (264 aa).

Residue R21 participates in dUMP binding. H51 serves as a coordination point for (6R)-5,10-methylene-5,6,7,8-tetrahydrofolate. A dUMP-binding site is contributed by 126 to 127; that stretch reads RR. The active-site Nucleophile is the C146. DUMP contacts are provided by residues 166–169, N177, and 207–209; these read RSAD and HLY. Residue D169 coordinates (6R)-5,10-methylene-5,6,7,8-tetrahydrofolate. A263 contacts (6R)-5,10-methylene-5,6,7,8-tetrahydrofolate.

Belongs to the thymidylate synthase family. Bacterial-type ThyA subfamily. As to quaternary structure, homodimer.

The protein resides in the cytoplasm. The enzyme catalyses dUMP + (6R)-5,10-methylene-5,6,7,8-tetrahydrofolate = 7,8-dihydrofolate + dTMP. The protein operates within pyrimidine metabolism; dTTP biosynthesis. Functionally, catalyzes the reductive methylation of 2'-deoxyuridine-5'-monophosphate (dUMP) to 2'-deoxythymidine-5'-monophosphate (dTMP) while utilizing 5,10-methylenetetrahydrofolate (mTHF) as the methyl donor and reductant in the reaction, yielding dihydrofolate (DHF) as a by-product. This enzymatic reaction provides an intracellular de novo source of dTMP, an essential precursor for DNA biosynthesis. This is Thymidylate synthase from Rhodopirellula baltica (strain DSM 10527 / NCIMB 13988 / SH1).